A 248-amino-acid chain; its full sequence is Probable phosphatase VFMJ11_A0091 (248 aa).

Zn(2+) contacts are provided by His8, His10, His16, His41, Glu74, His102, His132, Asp194, and His196.

Belongs to the PHP family. Zn(2+) serves as cofactor.

This Aliivibrio fischeri (strain MJ11) (Vibrio fischeri) protein is Probable phosphatase VFMJ11_A0091.